A 418-amino-acid chain; its full sequence is F-box protein At1g10780 (418 aa).

The 47-residue stretch at 1–47 (MDSLPDAILQYILSYLTSARDVAACNCVSKRWKESTDSVKSVVFHRN) folds into the F-box domain.

This chain is F-box protein At1g10780, found in Arabidopsis thaliana (Mouse-ear cress).